A 309-amino-acid chain; its full sequence is Methionyl-tRNA formyltransferase (309 aa).

109-112 (SLLP) provides a ligand contact to (6S)-5,6,7,8-tetrahydrofolate.

This sequence belongs to the Fmt family.

The catalysed reaction is L-methionyl-tRNA(fMet) + (6R)-10-formyltetrahydrofolate = N-formyl-L-methionyl-tRNA(fMet) + (6S)-5,6,7,8-tetrahydrofolate + H(+). Attaches a formyl group to the free amino group of methionyl-tRNA(fMet). The formyl group appears to play a dual role in the initiator identity of N-formylmethionyl-tRNA by promoting its recognition by IF2 and preventing the misappropriation of this tRNA by the elongation apparatus. This Clostridioides difficile (strain 630) (Peptoclostridium difficile) protein is Methionyl-tRNA formyltransferase.